The primary structure comprises 412 residues: Serine hydroxymethyltransferase (412 aa).

(6S)-5,6,7,8-tetrahydrofolate-binding positions include Leu121 and 125 to 127; that span reads GHL. Position 230 is an N6-(pyridoxal phosphate)lysine (Lys230). 353-355 is a (6S)-5,6,7,8-tetrahydrofolate binding site; the sequence is TPF.

Belongs to the SHMT family. As to quaternary structure, homodimer. It depends on pyridoxal 5'-phosphate as a cofactor.

The protein resides in the cytoplasm. It carries out the reaction (6R)-5,10-methylene-5,6,7,8-tetrahydrofolate + glycine + H2O = (6S)-5,6,7,8-tetrahydrofolate + L-serine. It functions in the pathway one-carbon metabolism; tetrahydrofolate interconversion. The protein operates within amino-acid biosynthesis; glycine biosynthesis; glycine from L-serine: step 1/1. Catalyzes the reversible interconversion of serine and glycine with tetrahydrofolate (THF) serving as the one-carbon carrier. This reaction serves as the major source of one-carbon groups required for the biosynthesis of purines, thymidylate, methionine, and other important biomolecules. Also exhibits THF-independent aldolase activity toward beta-hydroxyamino acids, producing glycine and aldehydes, via a retro-aldol mechanism. This chain is Serine hydroxymethyltransferase, found in Finegoldia magna (strain ATCC 29328 / DSM 20472 / WAL 2508) (Peptostreptococcus magnus).